Consider the following 92-residue polypeptide: Small ribosomal subunit protein uS19c (92 aa).

Belongs to the universal ribosomal protein uS19 family.

It localises to the plastid. It is found in the chloroplast. Protein S19 forms a complex with S13 that binds strongly to the 16S ribosomal RNA. In Nephroselmis olivacea (Green alga), this protein is Small ribosomal subunit protein uS19c.